Consider the following 250-residue polypeptide: Phosphoribosylaminoimidazole-succinocarboxamide synthase (250 aa).

The protein belongs to the SAICAR synthetase family.

The catalysed reaction is 5-amino-1-(5-phospho-D-ribosyl)imidazole-4-carboxylate + L-aspartate + ATP = (2S)-2-[5-amino-1-(5-phospho-beta-D-ribosyl)imidazole-4-carboxamido]succinate + ADP + phosphate + 2 H(+). Its pathway is purine metabolism; IMP biosynthesis via de novo pathway; 5-amino-1-(5-phospho-D-ribosyl)imidazole-4-carboxamide from 5-amino-1-(5-phospho-D-ribosyl)imidazole-4-carboxylate: step 1/2. This chain is Phosphoribosylaminoimidazole-succinocarboxamide synthase, found in Synechococcus sp. (strain CC9605).